Reading from the N-terminus, the 254-residue chain is Thiazole synthase (254 aa).

Lys95 serves as the catalytic Schiff-base intermediate with DXP. 1-deoxy-D-xylulose 5-phosphate contacts are provided by residues Gly156, 182 to 183 (AG), and 204 to 205 (NT).

Belongs to the ThiG family. As to quaternary structure, homotetramer. Forms heterodimers with either ThiH or ThiS.

It is found in the cytoplasm. It catalyses the reaction [ThiS sulfur-carrier protein]-C-terminal-Gly-aminoethanethioate + 2-iminoacetate + 1-deoxy-D-xylulose 5-phosphate = [ThiS sulfur-carrier protein]-C-terminal Gly-Gly + 2-[(2R,5Z)-2-carboxy-4-methylthiazol-5(2H)-ylidene]ethyl phosphate + 2 H2O + H(+). It functions in the pathway cofactor biosynthesis; thiamine diphosphate biosynthesis. Catalyzes the rearrangement of 1-deoxy-D-xylulose 5-phosphate (DXP) to produce the thiazole phosphate moiety of thiamine. Sulfur is provided by the thiocarboxylate moiety of the carrier protein ThiS. In vitro, sulfur can be provided by H(2)S. The polypeptide is Thiazole synthase (Shewanella sediminis (strain HAW-EB3)).